The following is a 271-amino-acid chain: Aquaporin-1 (271 aa).

Topologically, residues 1–11 are cytoplasmic; sequence MASEFKKKIFW. The chain crosses the membrane as a helical span at residues 12–29; sequence RAVVAEFLAMTLFIFISI. Topologically, residues 30–48 are extracellular; it reads GSALGFQYPVRNNQTSGAA. N-linked (GlcNAc...) asparagine glycosylation occurs at N42. A helical membrane pass occupies residues 49–67; sequence QDNVKVSLAFGLSIATLAQ. At 68–70 the chain is on the cytoplasmic side; that stretch reads SVG. An intramembrane segment occupies 71–84; the sequence is HISGAHLNPAVTLG. The short motif at 78 to 80 is the NPA 1 element; that stretch reads NPA. Topologically, residues 85 to 92 are cytoplasmic; sequence LLLSCQIS. The chain crosses the membrane as a helical span at residues 93 to 111; it reads VLRAVMYIIAQCVGAIVAT. The Extracellular segment spans residues 112–135; that stretch reads AILSGITSSLPGNSLGLNSLAPGV. The chain crosses the membrane as a helical span at residues 136–155; the sequence is DSGQGLGIEIIGTLQLVLCV. Residues 156 to 165 are Cytoplasmic-facing; that stretch reads LATTDRRRRD. A helical membrane pass occupies residues 166-183; the sequence is LGGSAPLAIGFSVALGHL. The Extracellular portion of the chain corresponds to 184–188; sequence LAIDY. Residues 189-201 lie within the membrane without spanning it; that stretch reads TGCGINPARSFGS. Residues 194–196 carry the NPA 2 motif; it reads NPA. Over 202 to 208 the chain is Extracellular; that stretch reads AVITHNF. A helical membrane pass occupies residues 209 to 226; it reads QDHWVFWVGPFIGGALAV. Over 227 to 271 the chain is Cytoplasmic; it reads LIYDFILAPRSSDLTDRVKVWTSGQVEEYDLDGDDINSRVEMKPK. Position 249 is a phosphoserine (S249). Y255 carries the post-translational modification Phosphotyrosine. At S264 the chain carries Phosphoserine.

This sequence belongs to the MIP/aquaporin (TC 1.A.8) family. Homotetramer; each monomer provides an independent water pore. Component of the ankyrin-1 complex in the erythrocyte, composed of ANK1, RHCE, RHAG, SLC4A1, EPB42, GYPA, GYPB and AQP1. Interacts with EPHB2; involved in endolymph production in the inner ear. Identified in a complex with STOM. Interacts (via the N-terminal) with ANK1 (via ANK 1-5 repeats). Interacts (via the C-terminal) with EPB42.

The protein resides in the cell membrane. The enzyme catalyses H2O(in) = H2O(out). It carries out the reaction nitric oxide(out) = nitric oxide(in). The catalysed reaction is CO2(out) = CO2(in). It catalyses the reaction glycerol(in) = glycerol(out). The enzyme catalyses H2O2(out) = H2O2(in). It carries out the reaction K(+)(in) = K(+)(out). The catalysed reaction is Na(+)(in) = Na(+)(out). Functionally, forms a water channel that facilitates the transport of water across cell membranes, playing a crucial role in water homeostasis in various tissues. Could also be permeable to small solutes including hydrogen peroxide, glycerol and gases such as amonnia (NH3), nitric oxide (NO) and carbon dioxide (CO2). Recruited to the ankyrin-1 complex, a multiprotein complex of the erythrocyte membrane, it could be part of a CO2 metabolon, linking facilitated diffusion of CO2 across the membrane, anion exchange of Cl(-)/HCO3(-) and interconversion of dissolved CO2 and carbonic acid in the cytosol. In vitro, it shows non-selective gated cation channel activity and may be permeable to cations like K(+) and Na(+) in vivo. This Sus scrofa (Pig) protein is Aquaporin-1.